The chain runs to 217 residues: Ribosomal RNA small subunit methyltransferase G (217 aa).

S-adenosyl-L-methionine-binding positions include Gly-78, Phe-83, 129 to 130, and Arg-146; that span reads AE.

It belongs to the methyltransferase superfamily. RNA methyltransferase RsmG family.

The protein localises to the cytoplasm. It catalyses the reaction guanosine(527) in 16S rRNA + S-adenosyl-L-methionine = N(7)-methylguanosine(527) in 16S rRNA + S-adenosyl-L-homocysteine. Its function is as follows. Specifically methylates the N7 position of guanine in position 527 of 16S rRNA. The sequence is that of Ribosomal RNA small subunit methyltransferase G from Geobacter sp. (strain M21).